Here is a 354-residue protein sequence, read N- to C-terminus: Uroporphyrinogen decarboxylase (354 aa).

Residues 27 to 31 (RQAGR), D77, Y154, T209, and H327 contribute to the substrate site.

It belongs to the uroporphyrinogen decarboxylase family. Homodimer.

It localises to the cytoplasm. It catalyses the reaction uroporphyrinogen III + 4 H(+) = coproporphyrinogen III + 4 CO2. The protein operates within porphyrin-containing compound metabolism; protoporphyrin-IX biosynthesis; coproporphyrinogen-III from 5-aminolevulinate: step 4/4. Its function is as follows. Catalyzes the decarboxylation of four acetate groups of uroporphyrinogen-III to yield coproporphyrinogen-III. The sequence is that of Uroporphyrinogen decarboxylase from Klebsiella pneumoniae (strain 342).